Here is a 37-residue protein sequence, read N- to C-terminus: Large ribosomal subunit protein bL36c (37 aa).

This sequence belongs to the bacterial ribosomal protein bL36 family.

The protein resides in the plastid. This Cuscuta gronovii (Common dodder) protein is Large ribosomal subunit protein bL36c.